The sequence spans 243 residues: Tryptophan synthase alpha chain (243 aa).

Active-site proton acceptor residues include Glu-32 and Asp-43.

This sequence belongs to the TrpA family. In terms of assembly, tetramer of two alpha and two beta chains.

It localises to the plastid. It is found in the chloroplast. It catalyses the reaction (1S,2R)-1-C-(indol-3-yl)glycerol 3-phosphate + L-serine = D-glyceraldehyde 3-phosphate + L-tryptophan + H2O. It participates in amino-acid biosynthesis; L-tryptophan biosynthesis; L-tryptophan from chorismate: step 5/5. Functionally, the alpha subunit is responsible for the aldol cleavage of indoleglycerol phosphate to indole and glyceraldehyde 3-phosphate. The polypeptide is Tryptophan synthase alpha chain (Cyanidioschyzon merolae (strain NIES-3377 / 10D) (Unicellular red alga)).